The following is a 532-amino-acid chain: O-phosphoserine--tRNA(Cys) ligase (532 aa).

Substrate contacts are provided by residues H188–T190, S233–S235, Y275–Y276, and N327.

This sequence belongs to the class-II aminoacyl-tRNA synthetase family. O-phosphoseryl-tRNA(Cys) synthetase subfamily. As to quaternary structure, homotetramer. Interacts with SepCysS.

The enzyme catalyses tRNA(Cys) + O-phospho-L-serine + ATP = O-phospho-L-seryl-tRNA(Cys) + AMP + diphosphate. In terms of biological role, catalyzes the attachment of O-phosphoserine (Sep) to tRNA(Cys). The polypeptide is O-phosphoserine--tRNA(Cys) ligase (Methanocella arvoryzae (strain DSM 22066 / NBRC 105507 / MRE50)).